Consider the following 272-residue polypeptide: Putative phosphoenolpyruvate synthase regulatory protein (272 aa).

ADP is bound at residue 152–159 (GVSRCGKT).

Belongs to the pyruvate, phosphate/water dikinase regulatory protein family. PSRP subfamily.

It catalyses the reaction [pyruvate, water dikinase] + ADP = [pyruvate, water dikinase]-phosphate + AMP + H(+). It carries out the reaction [pyruvate, water dikinase]-phosphate + phosphate + H(+) = [pyruvate, water dikinase] + diphosphate. Bifunctional serine/threonine kinase and phosphorylase involved in the regulation of the phosphoenolpyruvate synthase (PEPS) by catalyzing its phosphorylation/dephosphorylation. This Pseudomonas fluorescens (strain SBW25) protein is Putative phosphoenolpyruvate synthase regulatory protein.